We begin with the raw amino-acid sequence, 129 residues long: HTH-type transcriptional regulator HmrR (129 aa).

An HTH merR-type domain is found at 1–68 (MNIGEASERS…VEECRQLLAL (68 aa)). The segment at residues 4–23 (GEASERSGLPSKTIRYYEDI) is a DNA-binding region (H-T-H motif).

In terms of assembly, homodimer.

Its subcellular location is the cytoplasm. Its function is as follows. Regulates the transcription of actP. It detects cytoplasmic copper stress and activates transcription in response to increasing copper concentrations. In the absence of copper, it negatively regulates the transcription of actP. The protein is HTH-type transcriptional regulator HmrR (hmrR) of Rhizobium leguminosarum bv. viciae.